The sequence spans 344 residues: MLSSFPHRKTWRKSKKTVKVTRSYPTFPSLNAWEEFRGLLPVDGEPNPGAGLGVEEGLLCRVVHSPEFNLFLDSVVFESNFIQVKRGRNWRDVYKASNTMALGVTSSVPCLPLPNILLMASVKWHQGQNQTWNRPSIAPNIFLKRILPLRFVELQVCDHYQRILQLRTVTEKIYYLKLHPDHPETVFHFWIRLVQILQKGLSITTKDPRILVTHCLVPKNCSSPSGDSKLVQKKLQASQPSESLIQLMTKGESEALSQIFADLHQQNQLSFRSSRKVETNKNSSGKDSSREDSIPCTCDLRWRASFTYGEWERENPSGLQPLSLLSTLAASTGPQLAPPIGNSI.

The segment at 271-293 (FRSSRKVETNKNSSGKDSSREDS) is disordered.

Belongs to the GARIN family.

The protein resides in the golgi apparatus. RAB2B effector protein required for accurate acrosome formation and normal male fertility. In complex with RAB2A/RAB2B, seems to suppress excessive vesicle trafficking during acrosome formation. This is Golgi-associated RAB2 interactor protein 1B from Homo sapiens (Human).